The primary structure comprises 221 residues: Ubiquitin-conjugating enzyme E2 S (221 aa).

The region spanning 11–157 (QVLRLVYKEV…AHLLTEIHAM (147 aa)) is the UBC core domain. Cys95 functions as the Glycyl thioester intermediate in the catalytic mechanism. The interval 158-221 (GGTSGAPQEP…TDKKRALRRL (64 aa)) is disordered. Residues 193–206 (GTGTNNSNISNTNI) are compositionally biased toward low complexity. Residues 208–221 (AKKKTDKKRALRRL) are compositionally biased toward basic residues.

This sequence belongs to the ubiquitin-conjugating enzyme family.

The catalysed reaction is S-ubiquitinyl-[E1 ubiquitin-activating enzyme]-L-cysteine + [E2 ubiquitin-conjugating enzyme]-L-cysteine = [E1 ubiquitin-activating enzyme]-L-cysteine + S-ubiquitinyl-[E2 ubiquitin-conjugating enzyme]-L-cysteine.. It participates in protein modification; protein ubiquitination. In terms of biological role, catalyzes the covalent attachment of ubiquitin to other proteins. Acts as an essential factor of the anaphase promoting complex/cyclosome (APC/C), a cell cycle-regulated ubiquitin ligase that controls progression through mitosis. Acts by specifically elongating 'Lys-11'-linked polyubiquitin chains initiated by the E2 enzyme ube2c/ubch10 on APC/C substrates, enhancing the degradation of APC/C substrates by the proteasome and promoting mitotic exit. The sequence is that of Ubiquitin-conjugating enzyme E2 S (ube2s) from Danio rerio (Zebrafish).